A 248-amino-acid chain; its full sequence is Uridylate kinase (248 aa).

11–14 is a binding site for ATP; it reads KISG. Residue Gly-53 participates in UMP binding. Residues Gly-54 and Arg-58 each coordinate ATP. Residues Asp-74 and 135–142 contribute to the UMP site; that span reads AGSPYLTT. Residues Thr-162, Tyr-169, and Asp-172 each contribute to the ATP site.

This sequence belongs to the UMP kinase family. As to quaternary structure, homohexamer.

The protein resides in the cytoplasm. The enzyme catalyses UMP + ATP = UDP + ADP. Its pathway is pyrimidine metabolism; CTP biosynthesis via de novo pathway; UDP from UMP (UMPK route): step 1/1. Inhibited by UTP. Catalyzes the reversible phosphorylation of UMP to UDP. This is Uridylate kinase from Chlamydia pneumoniae (Chlamydophila pneumoniae).